A 189-amino-acid chain; its full sequence is Elongation factor P (189 aa).

N6-(3,6-diaminohexanoyl)-5-hydroxylysine is present on K34.

It belongs to the elongation factor P family. Post-translationally, may be beta-lysylated on the epsilon-amino group of Lys-34 by the combined action of EpmA and EpmB, and then hydroxylated on the C5 position of the same residue by EpmC (if this protein is present). Lysylation is critical for the stimulatory effect of EF-P on peptide-bond formation. The lysylation moiety may extend toward the peptidyltransferase center and stabilize the terminal 3-CCA end of the tRNA. Hydroxylation of the C5 position on Lys-34 may allow additional potential stabilizing hydrogen-bond interactions with the P-tRNA.

Its subcellular location is the cytoplasm. The protein operates within protein biosynthesis; polypeptide chain elongation. Its function is as follows. Involved in peptide bond synthesis. Alleviates ribosome stalling that occurs when 3 or more consecutive Pro residues or the sequence PPG is present in a protein, possibly by augmenting the peptidyl transferase activity of the ribosome. Modification of Lys-34 is required for alleviation. The polypeptide is Elongation factor P (Idiomarina loihiensis (strain ATCC BAA-735 / DSM 15497 / L2-TR)).